A 245-amino-acid polypeptide reads, in one-letter code: Eukaryotic translation initiation factor 6 (245 aa).

Serine 174 and serine 175 each carry phosphoserine; by CK1. Serine 231 is subject to Phosphoserine.

The protein belongs to the eIF-6 family. In terms of assembly, monomer. Associates with the 60S ribosomal subunit. In terms of processing, phosphorylation at Ser-174 and Ser-175 promotes nuclear export.

It localises to the cytoplasm. Its subcellular location is the nucleus. The protein localises to the nucleolus. In terms of biological role, binds to the 60S ribosomal subunit and prevents its association with the 40S ribosomal subunit to form the 80S initiation complex in the cytoplasm. Is also involved in ribosome biogenesis. Associates with pre-60S subunits in the nucleus and is involved in its nuclear export. Cytoplasmic release of TIF6 from 60S subunits and nuclear relocalization is promoted by the GTPase RIA1/EFL1 and by SDO1. Also required for pre-rRNA processing. The protein is Eukaryotic translation initiation factor 6 of Saccharomyces cerevisiae (strain ATCC 204508 / S288c) (Baker's yeast).